The primary structure comprises 379 residues: 2-nitroimidazole nitrohydrolase (379 aa).

The active-site Amidino-cysteine intermediate is Cys357.

This sequence belongs to the arginine deiminase family.

It catalyses the reaction 2-nitroimidazole + H2O = 1,3-dihydro-2H-imidazol-2-one + nitrite + H(+). In terms of biological role, involved in the biodegradation of 2-Nitroimidazole (2NI) which is a natural antibiotic and an analog of the synthetic nitroimidazoles used for treatment of tuberculosis, Chagas disease (also called American Trypanosomiasis) and cancer. Catalyzes the hydrolytic denitration of 2NI to produce imidazol-2-one and nitrite. It is also active against the 2NI synthetic derivative benznidazole. NnhA confers drug resistance to 2NI. This chain is 2-nitroimidazole nitrohydrolase (nnhA), found in Mycobacterium sp. (strain JS330).